A 338-amino-acid polypeptide reads, in one-letter code: Fructose-1,6-bisphosphatase class 1 (338 aa).

Mg(2+) contacts are provided by Glu92, Asp114, Leu116, and Asp117. Residues Asp117 to Ser120, Asn210, Tyr243, and Lys276 each bind substrate. Glu282 is a binding site for Mg(2+).

Belongs to the FBPase class 1 family. As to quaternary structure, homotetramer. The cofactor is Mg(2+).

It localises to the cytoplasm. The catalysed reaction is beta-D-fructose 1,6-bisphosphate + H2O = beta-D-fructose 6-phosphate + phosphate. The protein operates within carbohydrate biosynthesis; gluconeogenesis. The sequence is that of Fructose-1,6-bisphosphatase class 1 from Maridesulfovibrio salexigens (strain ATCC 14822 / DSM 2638 / NCIMB 8403 / VKM B-1763) (Desulfovibrio salexigens).